Reading from the N-terminus, the 208-residue chain is Large ribosomal subunit protein uL4 (208 aa).

The interval 50–83 (VKTRAEVSGGGRKPWKQKGTGRARQGSIRAPQWK) is disordered.

The protein belongs to the universal ribosomal protein uL4 family. As to quaternary structure, part of the 50S ribosomal subunit.

Functionally, one of the primary rRNA binding proteins, this protein initially binds near the 5'-end of the 23S rRNA. It is important during the early stages of 50S assembly. It makes multiple contacts with different domains of the 23S rRNA in the assembled 50S subunit and ribosome. Forms part of the polypeptide exit tunnel. In Mycoplasma capricolum subsp. capricolum (strain California kid / ATCC 27343 / NCTC 10154), this protein is Large ribosomal subunit protein uL4.